The chain runs to 221 residues: Thiopurine S-methyltransferase (221 aa).

W12, L47, E68, and R125 together coordinate S-adenosyl-L-methionine.

This sequence belongs to the class I-like SAM-binding methyltransferase superfamily. TPMT family.

Its subcellular location is the cytoplasm. It carries out the reaction S-adenosyl-L-methionine + a thiopurine = S-adenosyl-L-homocysteine + a thiopurine S-methylether.. This chain is Thiopurine S-methyltransferase, found in Legionella pneumophila (strain Corby).